The sequence spans 109 residues: Nucleoid-associated protein CKO_02678 (109 aa).

Residues 89 to 109 (KEKMASVSSGMQLPPGFKMPF) are disordered.

The protein belongs to the YbaB/EbfC family. In terms of assembly, homodimer.

It is found in the cytoplasm. The protein localises to the nucleoid. Binds to DNA and alters its conformation. May be involved in regulation of gene expression, nucleoid organization and DNA protection. In Citrobacter koseri (strain ATCC BAA-895 / CDC 4225-83 / SGSC4696), this protein is Nucleoid-associated protein CKO_02678.